The following is a 416-amino-acid chain: Vacuole membrane protein KMS2 (416 aa).

The residue at position 2 (Gly-2) is an N-acetylglycine. Residues 2 to 59 (GYGNRASSKTPAISGLREKHQQDLEKLTLTSQPFKTLRLFVVAVFLYVRRWSSYLLAN) lie on the Cytoplasmic side of the membrane. The chain crosses the membrane as a helical span at residues 60–80 (VGWLILFCSIFVAFAALLVTL). The Lumenal portion of the chain corresponds to 81–100 (DGPHVKHVEELSEYTRFGLW). Residues 101-123 (WIFLGVASSIGLGSGLHTFVLYL) form a helical membrane-spanning segment. Topologically, residues 124-249 (GPHIALFTIK…WLLSHSQYLN (126 aa)) are cytoplasmic. A helical membrane pass occupies residues 250 to 270 (FFTILILASVPNPLFDLAGIM). The Lumenal segment spans residues 271–281 (CGQFEKPFWEF). Residues 282 to 304 (FLATLIGKAIIKTHIQTVFIICV) form a helical membrane-spanning segment. At 305–315 (CNNQLLDWVEN) the chain is on the cytoplasmic side. The helical transmembrane segment at 316-336 (ELIYILSFVPGFASALPELTA) threads the bilayer. Residues 337–364 (KLRLMKEKYLIASPPVSSDINVKKWDLS) are Lumenal-facing. Residues 365-385 (FASVWNGVVWLMLLNFFGQIV) traverse the membrane as a helical segment. Residues 386-416 (TSTAQRYLKKQQEEELDALTNKSSLTSKKSK) lie on the Cytoplasmic side of the membrane.

Belongs to the VMP1 family.

The protein resides in the endoplasmic reticulum membrane. Its function is as follows. Involved in the early secretory pathway. Required for the correct export of secretory products from the endoplasmic reticulum (ER) and involved in the maintenance of ER integrity. The sequence is that of Vacuole membrane protein KMS2 from Arabidopsis thaliana (Mouse-ear cress).